We begin with the raw amino-acid sequence, 259 residues long: Type III pantothenate kinase (259 aa).

6–13 (DVGNTNCT) contacts ATP. Residue 107 to 110 (GSDR) coordinates substrate. The Proton acceptor role is filled by aspartate 109. Aspartate 129 lines the K(+) pocket. ATP is bound at residue threonine 132. Threonine 184 is a substrate binding site.

This sequence belongs to the type III pantothenate kinase family. As to quaternary structure, homodimer. NH4(+) is required as a cofactor. The cofactor is K(+).

The protein resides in the cytoplasm. It catalyses the reaction (R)-pantothenate + ATP = (R)-4'-phosphopantothenate + ADP + H(+). Its pathway is cofactor biosynthesis; coenzyme A biosynthesis; CoA from (R)-pantothenate: step 1/5. Functionally, catalyzes the phosphorylation of pantothenate (Pan), the first step in CoA biosynthesis. The protein is Type III pantothenate kinase of Listeria innocua serovar 6a (strain ATCC BAA-680 / CLIP 11262).